The primary structure comprises 122 residues: Large ribosomal subunit protein uL14 (122 aa).

The protein belongs to the universal ribosomal protein uL14 family. Part of the 50S ribosomal subunit. Forms a cluster with proteins L3 and L19. In the 70S ribosome, L14 and L19 interact and together make contacts with the 16S rRNA in bridges B5 and B8.

In terms of biological role, binds to 23S rRNA. Forms part of two intersubunit bridges in the 70S ribosome. This chain is Large ribosomal subunit protein uL14, found in Agathobacter rectalis (strain ATCC 33656 / DSM 3377 / JCM 17463 / KCTC 5835 / VPI 0990) (Eubacterium rectale).